The sequence spans 375 residues: Chlorophyll a/b light-harvesting protein PcbC (375 aa).

6 helical membrane-spanning segments follow: residues 40–60 (LLGA…SITV), 102–122 (YFVI…GGLF), 151–171 (LSLI…AFVA), 225–245 (IIGG…WHIL), 262–282 (AILS…GFFV), and 300–320 (GAAA…VWHA). The interval 352–375 (ARTFIGRGKPQPEPPKKKGLFGRG) is disordered.

It belongs to the PsbB/PsbC family. IsiA/Pcb subfamily. The antenna complex consists of chlorophylls (a and b) and chlorophyll a/b binding proteins. Requires chlorophyll a as cofactor. Chlorophyll b serves as cofactor.

Its subcellular location is the cellular thylakoid membrane. The antenna complex functions as a light receptor, it captures and delivers excitation energy to photosystems II and I. The Prochlorales pcb genes are not related to higher plant LHCs. The protein is Chlorophyll a/b light-harvesting protein PcbC (pcbC) of Prochlorothrix hollandica.